A 382-amino-acid chain; its full sequence is Protein-arginine rhamnosyltransferase (382 aa).

DTDP-beta-L-rhamnose-binding positions include 17-20, Tyr187, Gln252, and 268-272; these read NFGD and RGEDS. Catalysis depends on Asp20, which acts as the Proton acceptor. The active site involves Glu270.

Belongs to the glycosyltransferase 104 family.

The enzyme catalyses dTDP-beta-L-rhamnose + L-arginyl-[protein] = N(omega)-(alpha-L-rhamnosyl)-L-arginyl-[protein] + dTDP + H(+). In terms of biological role, protein-arginine rhamnosyltransferase that catalyzes the transfer of a single rhamnose to elongation factor P (EF-P) on 'Lys-32', a modification required for EF-P-dependent rescue of polyproline stalled ribosomes. The polypeptide is Protein-arginine rhamnosyltransferase (Neisseria meningitidis).